Consider the following 819-residue polypeptide: Molybdenum cofactor sulfurase (819 aa).

N6-(pyridoxal phosphate)lysine is present on Lys-271. The active site involves Cys-430. Residues 650-817 form the MOSC domain; the sequence is CKLLRYSSST…IGVGEEVNPD (168 aa).

The protein belongs to the class-V pyridoxal-phosphate-dependent aminotransferase family. MOCOS subfamily. Requires pyridoxal 5'-phosphate as cofactor. In terms of tissue distribution, ubiquitously expressed.

It carries out the reaction Mo-molybdopterin + L-cysteine + AH2 = thio-Mo-molybdopterin + L-alanine + A + H2O. Its pathway is cofactor biosynthesis; molybdopterin biosynthesis. Its function is as follows. Sulfurates the molybdenum cofactor. Sulfation of molybdenum is essential for xanthine dehydrogenase (XDH) and aldehyde oxidase (ADO) enzymes in which molybdenum cofactor is liganded by 1 oxygen and 1 sulfur atom in active form. Modulates cold stress- and osmotic stress-responsive gene expression by acting as key regulator of abscisic acid (ABA) biosynthesis. The sequence is that of Molybdenum cofactor sulfurase (ABA3) from Arabidopsis thaliana (Mouse-ear cress).